Reading from the N-terminus, the 347-residue chain is P2Y purinoceptor 12 (347 aa).

Over 1–33 (MDVPGVNTTSANTTFSPGTSTLCVRDYKITQVL) the chain is Extracellular. N-linked (GlcNAc...) asparagine glycosylation is found at asparagine 7 and asparagine 12. Cystine bridges form between cysteine 23–cysteine 276 and cysteine 103–cysteine 181. Residues 34 to 56 (FPLLYTVLFFAGLITNSLAMRIF) form a helical membrane-spanning segment. Residues 57 to 67 (FQIRSKSNFII) are Cytoplasmic-facing. Phosphoserine occurs at positions 61 and 63. Residues 68 to 88 (FLKNTVISDLLMILTFPFKIL) form a helical membrane-spanning segment. Topologically, residues 89–103 (SDAKLGAGPLRTLVC) are extracellular. Positions 99, 103, and 111 each coordinate ADP. Residues 104 to 124 (QVTSVTFYFTMYISISFLGLI) form a helical membrane-spanning segment. Residues 125–148 (TIDRYLKTTRPFKTSSPSNLLGAK) lie on the Cytoplasmic side of the membrane. The helical transmembrane segment at 149-168 (ILSVVIWAFMFLISLPNMIL) threads the bilayer. ADP is bound by residues 162–165 (SLPN), 181–185 (CSFLK), histidine 193, and asparagine 197. The Extracellular portion of the chain corresponds to 169–191 (TNRRPKDKDVTKCSFLKSEFGLV). A helical membrane pass occupies residues 192-213 (WHEIVNYICQVIFWINFLIVIV). Over 214-239 (CYSLITKELYRSYVRTRGSAKVPKKK) the chain is Cytoplasmic. The chain crosses the membrane as a helical span at residues 240-265 (VNVKVFIIIAVFFICFVPFHFARIPY). ADP is bound by residues 262–265 (RIPY), glutamine 269, and lysine 286. The Extracellular portion of the chain corresponds to 266-284 (TLSQTRAVFDCSAENTLFY). Residues 285-304 (VKESTLWLTSLNACLDPFIY) form a helical membrane-spanning segment. At 305–347 (FFLCKSFRNSLTSMLRCSNSTSTSGTNKKKGQEGGEPSEETPM) the chain is on the cytoplasmic side. The interval 321–347 (CSNSTSTSGTNKKKGQEGGEPSEETPM) is disordered.

This sequence belongs to the G-protein coupled receptor 1 family.

It is found in the cell membrane. Functionally, receptor for ADP and ATP coupled to G-proteins that inhibit the adenylyl cyclase second messenger system. Required for normal platelet aggregation and blood coagulation. This Mus musculus (Mouse) protein is P2Y purinoceptor 12 (P2ry12).